The following is a 132-amino-acid chain: Small ribosomal subunit protein uS8c (132 aa).

It belongs to the universal ribosomal protein uS8 family. Part of the 30S ribosomal subunit.

Its subcellular location is the plastid. It localises to the chloroplast. Its function is as follows. One of the primary rRNA binding proteins, it binds directly to 16S rRNA central domain where it helps coordinate assembly of the platform of the 30S subunit. This is Small ribosomal subunit protein uS8c (rps8) from Chaetosphaeridium globosum (Charophycean green alga).